We begin with the raw amino-acid sequence, 326 residues long: tRNA(Ile)-lysidine synthase (326 aa).

25–30 (SGGQDS) lines the ATP pocket.

The protein belongs to the tRNA(Ile)-lysidine synthase family.

The protein localises to the cytoplasm. It carries out the reaction cytidine(34) in tRNA(Ile2) + L-lysine + ATP = lysidine(34) in tRNA(Ile2) + AMP + diphosphate + H(+). In terms of biological role, ligates lysine onto the cytidine present at position 34 of the AUA codon-specific tRNA(Ile) that contains the anticodon CAU, in an ATP-dependent manner. Cytidine is converted to lysidine, thus changing the amino acid specificity of the tRNA from methionine to isoleucine. This is tRNA(Ile)-lysidine synthase from Prochlorococcus marinus (strain NATL1A).